A 189-amino-acid chain; its full sequence is Peptidyl-tRNA hydrolase (189 aa).

Residue tyrosine 17 participates in tRNA binding. Histidine 22 functions as the Proton acceptor in the catalytic mechanism. 3 residues coordinate tRNA: phenylalanine 65, asparagine 67, and asparagine 113.

The protein belongs to the PTH family. In terms of assembly, monomer.

The protein localises to the cytoplasm. The catalysed reaction is an N-acyl-L-alpha-aminoacyl-tRNA + H2O = an N-acyl-L-amino acid + a tRNA + H(+). Functionally, hydrolyzes ribosome-free peptidyl-tRNAs (with 1 or more amino acids incorporated), which drop off the ribosome during protein synthesis, or as a result of ribosome stalling. Catalyzes the release of premature peptidyl moieties from peptidyl-tRNA molecules trapped in stalled 50S ribosomal subunits, and thus maintains levels of free tRNAs and 50S ribosomes. This Mycoplasma genitalium (strain ATCC 33530 / DSM 19775 / NCTC 10195 / G37) (Mycoplasmoides genitalium) protein is Peptidyl-tRNA hydrolase.